The chain runs to 551 residues: HTH-type transcriptional regulator SgrR (551 aa).

Positions 1-116 (MPSARLQQQF…LVSHLGRSFR (116 aa)) constitute an HTH marR-type domain. Residues 26–49 (LNELAALLSCSRRHMRTLLNTMQD) constitute a DNA-binding region (H-T-H motif). Residues 163–492 (ELEADIAHHW…IDWQADAARW (330 aa)) are solute-binding.

Activates the small RNA gene sgrS under glucose-phosphate stress conditions as well as yfdZ. Represses its own transcription under both stress and non-stress conditions. Might act as a sensor of the intracellular accumulation of phosphoglucose by binding these molecules in its C-terminal solute-binding domain. The chain is HTH-type transcriptional regulator SgrR from Shigella sonnei (strain Ss046).